We begin with the raw amino-acid sequence, 225 residues long: PKHD-type hydroxylase YbiX (225 aa).

Residues 78–177 (TLSTPLFNRY…RVASFMWIQS (100 aa)) enclose the Fe2OG dioxygenase domain. Fe cation is bound by residues histidine 96, aspartate 98, and histidine 158. Residue arginine 168 participates in 2-oxoglutarate binding.

Fe(2+) is required as a cofactor. It depends on L-ascorbate as a cofactor.

The sequence is that of PKHD-type hydroxylase YbiX from Escherichia coli O8 (strain IAI1).